A 2303-amino-acid polypeptide reads, in one-letter code: MACKHGYPDVCPICTAVDATPDFEYLLMADGEWFPTDLLCVDLDDDVFWPSDTSTQPQTMEWTDVPLVCDTVMEPQGNASSSDKSNSQSSGNEGVIINNFYSNQYQNSIDLSASGGNAGDAPQNNGQLSSILGGAANAFATMAPLLMDQNTEEMENLSDRVASDKAGNSATNTQSTVGRLCGYGKSHHGEHPTSCADAATDKVLAAERYYTIDLASWTTSQEAFSHIRIPLPHVLAGEDGGVFGATLRRHYLCKTGWRVQVQCNASQFHAGSLLVFMAPEFYTGKGTKSGTMEPSDPFTMDTTWRSPQSAPTGYRYDRQAGFFAMNHQNQWQWTVYPHQILNLRTNTTVDLEVPYVNVAPSSSWTQHANWTLVVAVLSPLQYATGSSPDVQITASLQPVNPVFNGLRHETVLAQSPIPVTVREHQGCFYSTNPDTTVPIYGKTISTPSDYMCGEFSDLLELCKLPTFLGNPSTDNKRYPYFSATNSVPATSLVDYQVALSCSCTANSMLAAVARNFNQYRGSLNFLFVFTGAAMVKGKFRIAYTPPGAGKPTTRDQAMQATYAIWDLGLNSSFNFTAPFISPTHYRQTSYTSPTITSVDGWVTVWQLTPLTYPSGTPTHSDILTLVSAGDDFTLRMPISPTKWVPQGIDNAEKGKVSNDDASVDFVAEPVKLPENQTRVAFFYDRAVPIGMLRPGQNMETTFSYQENDFRLNCLLLTPLPSYCPDSSSGPVRTKAPVQWRWVRSGGANGANFPLMTKQDYAFLCFSPFTYYKCDLEVTVSAMGAGTVSSVLRWAPTGAPADVTDQLIGYTPSLGETRNPHMWIVGSGNSQISFVVPYNSPLSVLPAAWFNGWSDFGNTKDFGVAPTSDFGRIWIQGNSSASVRIRYKKMKVFCPRPTLFFPWPTPTTTKINADNPVPILELENPASLYRIDLFITFTDELITFDYKVHGRPVLTFRIPGFGLTPAGRMLVCMGAKPAHSPFTSSKSLYHVIFTSTCNSFSFTIYKGRYRSWKKPIHDELVDRGYTTFREFFKAVRGYHADYYKQRLIHDVEMNPGPVQSVFQPQGAVLTKSLAPQAGIQNILLRLLGIEGDCSEVSKAITVVTDLVAAWEKAKTTLVSPEFWSELILKTTKFIAASVLYLHNPDFTTTVCLSLMTGVDLLTNDSVFDWLKSKLSSFFRTPPPACPNVMQPQGPLREANEGFTFAKNIEWATKTIQSIVNWLTSWFKQEEDHPQSKLDKLLMEFPDHCRNIMDMRNGRKAYCECTASFKYFDDLYNLAVTCKRIPLASLCEKFKNRHDHSVTRPEPVVAVLRGAAGQGKSVTSQIIAQSVSKMAFGRQSVYSMPPDSEYFDGYENQFSVIMDDLGQNPDGEDFTVFCQMVSSTNFLPNMAHLERKGTPFTSSFIVATTNLPKFRPVTVAHYPAVDRRITFDFTVTAGPHCKTPAGMLDIEKAFDEIPGSKPQLACFSADCPLLHKRGVMFTCNRTKTVYNLQQVVKMVNDTITRKTENVKKMNSLVAQSPPDWQHFENILTCLRQNNAALQDQVDELQEAFTQARERSDFLSDWLKVSAIIFAGIVSLSAVIKLASKFKESIWPTPVRVELSEGEQAAYAGRARAQKQALQVLDIQGGGKVLAQAGNPVMDFELFCAKNMVSPITFYYPDKAEVTQSCLLLRAHLFVVNRHVAETEWTAFKLRDVRHERDTVVMRSVNRSGAETDLTFVKVTKGPLFKDNVNKFCSNKDDFPARNDTVTGIMNTGLAFVYSGNFLIGNQPVNTTTGACFNHCLHYRAQTRRGWCGSAIICNVNGKKAVYGMHSAGGGGLAAATIITRELIEAAEKSMLALEPQGAIVDISTGSVVHVPRKTKLRRTVAHDVFQPKFEPAVLSRYDPRTDKDVDVVAFSKHTTNMESLPPIFDIVCGEYANRVFTILGKDNGLLTVEQAVLGLSGMDPMEKDTSPGLPYTQQGLRRTDLLDFNTAKMTPQLDYAHSKLVLGVYDDVVYQSFLKDEIRPLEKIHEAKTRIVDVPPFAHCIWGRQLLGRFASKFQTKPGFELGSAIGTDPDVDWTRYAAELSGFNYVYDVDYSNFDASHSTAMFECLINNFFTEQNGFDRRIAEYLRSLAVSRHAYEDRRVLIRGGLPSGCAATSMLNTIMNNVIIRAALYLTYSNFEFDDIKVLSYGDDLLIGTNYQIDFNLVKERLAPFGYKITPANKTTTFPLTSHLQDVTFLKRRFVRFNSYLFRPQMDAVNLKAMVSYCKPGTLKEKLMSIALLAVHSGPDIYDEIFLPFRNVGIVVPTYDSMLYRWLSLFR.

Residues 3 to 14 fold into a zinc finger; sequence CKHGYPDVCPIC. An acidic region spans residues 30-46; that stretch reads DGEWFPTDLLCVDLDDD. Residues 60-73 form a theilo region; the sequence is MEWTDVPLVCDTVM. The segment at 73–93 is disordered; it reads MEPQGNASSSDKSNSQSSGNE. G77 carries N-myristoyl glycine; by host lipidation. The span at 80-90 shows a compositional bias: low complexity; the sequence is SSSDKSNSQSS. C501 and C503 are disulfide-bonded. Residues 1041-1047 form a host EIF4E binding region; sequence YYKQRLI. The 166-residue stretch at 1283-1448 folds into the SF3 helicase domain; that stretch reads IPLASLCEKF…CKTPAGMLDI (166 aa). 1312–1319 contributes to the ATP binding site; sequence GAAGQGKS. Position 1608 is an O-(5'-phospho-RNA)-tyrosine (Y1608). The 194-residue stretch at 1636–1829 folds into the Peptidase C3 domain; that stretch reads NPVMDFELFC…AATIITRELI (194 aa). Catalysis depends on for protease 3C activity residues H1680, D1714, and C1793. The RdRp catalytic domain occupies 2071–2189; it reads NYVYDVDYSN…GTNYQIDFNL (119 aa). Residues D2077 and D2175 each act as for RdRp activity in the active site.

This sequence belongs to the picornaviruses polyprotein family. In terms of assembly, interacts with host EIF4E. Interacts with the leader protein. As to quaternary structure, interacts with host RAN; the complex L-RAN recruits cellular kinases responsible for the L-induced nucleocytoplasmic trafficking inhibition. The complex L-RAN can further bind to the host exportins XPO1/CRM1 and CSE1L/CAS. Interacts with the protein 2A. Interacts with host RNASEL; this interaction prevents RNASEL activation by its substrate 2'-5' oligoadenylates. Post-translationally, phosphorylated. In terms of processing, specific enzymatic cleavages by the viral protease in vivo yield a variety of precursors and mature proteins. The polyprotein seems to be cotranslationally cleaved at the 2A/2B junction by a ribosomal skip from one codon to the next without formation of a peptide bond. This process would release the P1-2A peptide from the translational complex. During virion maturation, immature virions are rendered infectious following cleavage of VP0 into VP4 and VP2. This maturation seems to be an autocatalytic event triggered by the presence of RNA in the capsid and is followed by a conformational change of the particle. Post-translationally, uridylylated by the polymerase and is covalently linked to the 5'-end of genomic RNA. This uridylylated form acts as a nucleotide-peptide primer for the polymerase. In terms of processing, myristoylation is required during RNA encapsidation and formation of the mature virus particle.

The protein resides in the virion. It localises to the host cytoplasm. Its subcellular location is the host nucleus. It is found in the host nucleolus. The protein localises to the host cytoplasmic vesicle membrane. It carries out the reaction RNA(n) + a ribonucleoside 5'-triphosphate = RNA(n+1) + diphosphate. It catalyses the reaction ATP + H2O = ADP + phosphate + H(+). The enzyme catalyses Selective cleavage of Gln-|-Gly bond in the poliovirus polyprotein. In other picornavirus reactions Glu may be substituted for Gln, and Ser or Thr for Gly.. Its function is as follows. Forms a complex with host RAN and probably binds to exportins carrying activated MAPK in order to mediate the hyperphosphorylation of host Phe/Gly containing nuclear pore proteins (Nups) resulting in cessation of active nucleocytoplasmic transport. Proteins with NLS signals fail to import, cellular mRNAs fail to export, and some proteins small enough for diffusion are not retained anymore (efflux). The resulting inhibition of cellular protein synthesis serves to ensure maximal viral gene expression and to evade host immune response. The leader protein also inhibits host interferon regulatory factor 3 (IRF3) dimerization, thereby blocking the transcriptional activation of IFN genes. Binds to host RNase L thereby preventing its activation by 2'-5' oligoadenylates in order to counteract the antiviral interferon-inducible OAS/RNase L pathway. Inhibits the integrated stress response (ISR) in the infected cell. Inhibits the host EIF2AK2/PKR by rendering this kinase unable to detect double-stranded RNA. Also impairs host stress granule formation probably by acting on a step downstream of EIF2AK2/PKR activation. Functionally, forms an icosahedral capsid of pseudo T=3 symmetry with capsid proteins VP2 and VP3. Together they form an icosahedral capsid composed of 60 copies of each VP1, VP2, and VP3, with a diameter of approximately 300 Angstroms. VP4 lies on the inner surface of the protein shell formed by VP1, VP2 and VP3. All the three latter proteins contain a beta-sheet structure called beta-barrel jelly roll. VP1 is situated at the 12 fivefold axes, whereas VP2 and VP3 are located at the quasi-sixfold axes. Lies on the inner surface of the capsid shell. After binding to the host receptor, the capsid undergoes conformational changes. Capsid protein VP4 is released, capsid protein VP1 N-terminus is externalized, and together, they shape a pore in the host membrane through which the viral genome is translocated into the host cell cytoplasm. After genome has been released, the channel shrinks. In terms of biological role, VP0 precursor is a component of immature procapsids. Its function is as follows. Involved in host translation shutoff by inhibiting cap-dependent mRNA translation. Nuclear localization is required for this function. The resulting inhibition of cellular protein synthesis serves to ensure maximal viral gene expression and to evade host immune response. Inhibits the phosphorylation of the leader protein. Binds to the RNA stem-loop essential for the ribosomal frameshift event and trans-activates the production of protein 2B*. Functionally, affects membrane integrity and causes an increase in membrane permeability. Associates with and induces structural rearrangements of intracellular membranes. It displays RNA-binding, nucleotide binding and NTPase activities. In terms of biological role, serves as membrane anchor via its hydrophobic domain. Its function is as follows. Forms a primer, VPg-pU, which is utilized by the polymerase for the initiation of RNA chains. Functionally, cysteine protease that generates mature viral proteins from the precursor polyprotein. In addition to its proteolytic activity, it binds to viral RNA, and thus influences viral genome replication. RNA and substrate cooperatively bind to the protease. Cleaves host PABP1, this cleavage is important for viral replication. Replicates the genomic and antigenomic RNAs by recognizing replications specific signals. Performs VPg uridylylation. In Mus musculus (Mouse), this protein is Genome polyprotein.